The primary structure comprises 158 residues: Transcription elongation factor GreA (158 aa).

Belongs to the GreA/GreB family.

Necessary for efficient RNA polymerase transcription elongation past template-encoded arresting sites. The arresting sites in DNA have the property of trapping a certain fraction of elongating RNA polymerases that pass through, resulting in locked ternary complexes. Cleavage of the nascent transcript by cleavage factors such as GreA or GreB allows the resumption of elongation from the new 3'terminus. GreA releases sequences of 2 to 3 nucleotides. This chain is Transcription elongation factor GreA, found in Baumannia cicadellinicola subsp. Homalodisca coagulata.